A 175-amino-acid chain; its full sequence is Ribosome maturation factor RimM (175 aa).

Residues 95 to 175 enclose the PRC barrel domain; it reads SEDEFYWREL…RIEVDWDPGF (81 aa).

It belongs to the RimM family. In terms of assembly, binds ribosomal protein uS19.

The protein resides in the cytoplasm. An accessory protein needed during the final step in the assembly of 30S ribosomal subunit, possibly for assembly of the head region. Essential for efficient processing of 16S rRNA. May be needed both before and after RbfA during the maturation of 16S rRNA. It has affinity for free ribosomal 30S subunits but not for 70S ribosomes. This chain is Ribosome maturation factor RimM, found in Aliivibrio salmonicida (strain LFI1238) (Vibrio salmonicida (strain LFI1238)).